A 601-amino-acid chain; its full sequence is Proline--tRNA ligase (601 aa).

The protein belongs to the class-II aminoacyl-tRNA synthetase family. ProS type 1 subfamily. Homodimer.

The protein localises to the cytoplasm. It carries out the reaction tRNA(Pro) + L-proline + ATP = L-prolyl-tRNA(Pro) + AMP + diphosphate. Catalyzes the attachment of proline to tRNA(Pro) in a two-step reaction: proline is first activated by ATP to form Pro-AMP and then transferred to the acceptor end of tRNA(Pro). As ProRS can inadvertently accommodate and process non-cognate amino acids such as alanine and cysteine, to avoid such errors it has two additional distinct editing activities against alanine. One activity is designated as 'pretransfer' editing and involves the tRNA(Pro)-independent hydrolysis of activated Ala-AMP. The other activity is designated 'posttransfer' editing and involves deacylation of mischarged Ala-tRNA(Pro). The misacylated Cys-tRNA(Pro) is not edited by ProRS. The polypeptide is Proline--tRNA ligase (Picosynechococcus sp. (strain ATCC 27264 / PCC 7002 / PR-6) (Agmenellum quadruplicatum)).